An 889-amino-acid polypeptide reads, in one-letter code: MEGGLADGEPDRTSLLGDSKDVLGPSTVVANSDESQLLTPGKMSQRQGKEAYPTPTKDLHQPSLSPASPHSQGFERGKEDISQNKDESSLSMSKSKSESKLYNGSEKDSSTSSKLTKKESLKVQKKNYREEKKRATKELLSTITDPSVIVMADWLKIRGTLKSWTKLWCVLKPGVLLIYKTQKNGQWVGTVLLNACEIIERPSKKDGFCFKLFHPLEQSIWAVKGPKGEAVGSITQPLPSSYLIIRATSESDGRCWMDALELALKCSSLLKRTMIREGKEHDLSVSSDSTHVTFYGLLRANNLHSGDNFQLNDSEIERQHFKDQDMYSDKSDKENDQEHDESDNEVMGKSEESDTDTSERQDDSYIEPEPVEPLKETTYTEQSHEELGEAGEASQTETVSEENKSLIWTLLKQVRPGMDLSKVVLPTFILEPRSFLDKLSDYYYHADFLSEAALEENPYFRLKKVVKWYLSGFYKKPKGLKKPYNPILGETFRCLWIHPRTNSKTFYIAEQVSHHPPISAFYVSNRKDGFCLSGSILAKSKFYGNSLSAILEGEARLTFLNRGEDYVMTMPYAHCKGILYGTMTLELGGTVNITCQKTGYSAILEFKLKPFLGSSDCVNQISGKLKLGKEVLATLEGHWDSEVFITDKKTDNSEVFWNPTPDIKQWRLIRHTVKFEEQGDFESEKLWQRVTRAINAKDQTEATQEKYVLEEAQRQAARDRKTKNEEWSCKLFELDPLTGEWHYKFADTRPWDPLNDMIQFEKDGVIQTKVKHRTPMVSVPKMKHKPTRQQKKVAKGYSSPEPDIQDSSGSEAQSVKPSTRRKKGIELGDIQSSIESIKQTQEEIKRNIMALRNHLVSSTPATDYFLQQKDYFIIFLLILLQVIINFMFK.

An N-acetylmethionine modification is found at methionine 1. Residues 1–129 (MEGGLADGEP…SLKVQKKNYR (129 aa)) form a disordered region. Serine 14 is modified (phosphoserine). Composition is skewed to polar residues over residues 28–46 (VVAN…MSQR) and 62–71 (PSLSPASPHS). 2 positions are modified to phosphoserine: serine 65 and serine 68. 3 stretches are compositionally biased toward basic and acidic residues: residues 73 to 88 (GFER…KDES), 95 to 109 (SKSE…EKDS), and 116 to 129 (TKKE…KNYR). One can recognise a PH domain in the interval 148 to 265 (VIVMADWLKI…WMDALELALK (118 aa)). Phosphoserine is present on residues serine 314, serine 328, and serine 342. Basic and acidic residues predominate over residues 322–336 (KDQDMYSDKSDKEND). A disordered region spans residues 322-399 (KDQDMYSDKS…AGEASQTETV (78 aa)). The span at 346–363 (VMGKSEESDTDTSERQDD) shows a compositional bias: basic and acidic residues. A 1,2-diacyl-sn-glycero-3-phospho-(1D-myo-inositol 4-phosphate)-binding positions include 420–425 (LSKVVL), 482–485 (KPYN), and 514–515 (HH). A 1,2-diacyl-sn-glycero-3-phospho-L-serine is bound by residues 420–425 (LSKVVL) and asparagine 485. Serine 540 contributes to the a 1,2-diacyl-sn-glycero-3-phospho-L-serine binding site. Residues lysine 706, glutamate 710, and arginine 714 each contribute to the a 1,2-diacyl-sn-glycero-3-phospho-(1D-myo-inositol 4-phosphate) site. A disordered region spans residues 771–823 (KHRTPMVSVPKMKHKPTRQQKKVAKGYSSPEPDIQDSSGSEAQSVKPSTRRKK). The segment covering 781-794 (KMKHKPTRQQKKVA) has biased composition (basic residues). Polar residues predominate over residues 805-817 (QDSSGSEAQSVKP). Serine 807, serine 808, serine 810, and serine 814 each carry phosphoserine. A helical membrane pass occupies residues 871-888 (YFIIFLLILLQVIINFMF).

The protein belongs to the OSBP family. As to quaternary structure, interacts with SPAG5. Interacts with NUP62. Widely expressed. Expressed at higher level in macrophages.

It localises to the endoplasmic reticulum membrane. It is found in the nucleus membrane. Lipid transporter involved in lipid countertransport between the endoplasmic reticulum and the plasma membrane: specifically exchanges phosphatidylserine with phosphatidylinositol 4-phosphate (PI4P), delivering phosphatidylserine to the plasma membrane in exchange for PI4P, which is degraded by the SAC1/SACM1L phosphatase in the endoplasmic reticulum. Binds phosphatidylserine and PI4P in a mutually exclusive manner. Binds oxysterol, 25-hydroxycholesterol and cholesterol. The chain is Oxysterol-binding protein-related protein 8 (OSBPL8) from Homo sapiens (Human).